A 393-amino-acid chain; its full sequence is Nuclear speckle splicing regulatory protein 1 homolog (393 aa).

The interval 1–49 (MSAPPKRFGLIVKQKEEPKRAPVRVSSVFGDDDDDEAPATATNTSSASV) is disordered. Over residues 39-48 (ATATNTSSAS) the composition is skewed to low complexity. Positions 76–166 (NYDEIQAIKN…YREQEAEEAA (91 aa)) form a coiled coil. The disordered stretch occupies residues 187–350 (LLNDLARDPT…SLKDKLKPKR (164 aa)). The span at 199–209 (KQRKMEKKNVR) shows a compositional bias: basic residues. Composition is skewed to basic and acidic residues over residues 222 to 236 (EDVK…KSIY), 243 to 261 (DEKK…EGEL), 317 to 333 (DHAQ…KSPE), and 341 to 350 (SLKDKLKPKR).

This sequence belongs to the NSRP1 family.

This Caenorhabditis briggsae protein is Nuclear speckle splicing regulatory protein 1 homolog.